The sequence spans 69 residues: Probable Sec-independent protein translocase protein TatE (69 aa).

Residues 1 to 21 (MEGISIAKLLVIGALIVLLFG) form a helical membrane-spanning segment. Residues 45–69 (DDQPAAKSSAQDEHPAAISETRPKE) form a disordered region. The segment covering 54–69 (AQDEHPAAISETRPKE) has biased composition (basic and acidic residues).

Belongs to the TatA/E family. TatE subfamily.

The protein localises to the cell inner membrane. In terms of biological role, part of the twin-arginine translocation (Tat) system that transports large folded proteins containing a characteristic twin-arginine motif in their signal peptide across membranes. TatE shares overlapping functions with TatA. The chain is Probable Sec-independent protein translocase protein TatE from Dickeya chrysanthemi (strain Ech1591) (Dickeya zeae (strain Ech1591)).